Consider the following 491-residue polypeptide: Protein nucleotidyltransferase YdiU (491 aa).

ATP-binding residues include Gly-94, Gly-96, Arg-97, Lys-117, Asp-129, Gly-130, Arg-180, and Arg-187. Asp-256 serves as the catalytic Proton acceptor. Mg(2+) is bound by residues Asn-257 and Asp-266. ATP is bound at residue Asp-266.

It belongs to the SELO family. It depends on Mg(2+) as a cofactor. Mn(2+) serves as cofactor.

The catalysed reaction is L-seryl-[protein] + ATP = 3-O-(5'-adenylyl)-L-seryl-[protein] + diphosphate. The enzyme catalyses L-threonyl-[protein] + ATP = 3-O-(5'-adenylyl)-L-threonyl-[protein] + diphosphate. It catalyses the reaction L-tyrosyl-[protein] + ATP = O-(5'-adenylyl)-L-tyrosyl-[protein] + diphosphate. It carries out the reaction L-histidyl-[protein] + UTP = N(tele)-(5'-uridylyl)-L-histidyl-[protein] + diphosphate. The catalysed reaction is L-seryl-[protein] + UTP = O-(5'-uridylyl)-L-seryl-[protein] + diphosphate. The enzyme catalyses L-tyrosyl-[protein] + UTP = O-(5'-uridylyl)-L-tyrosyl-[protein] + diphosphate. Functionally, nucleotidyltransferase involved in the post-translational modification of proteins. It can catalyze the addition of adenosine monophosphate (AMP) or uridine monophosphate (UMP) to a protein, resulting in modifications known as AMPylation and UMPylation. The protein is Protein nucleotidyltransferase YdiU of Alkaliphilus metalliredigens (strain QYMF).